A 501-amino-acid polypeptide reads, in one-letter code: Dye-decolorizing peroxidase (501 aa).

Positions methionine 1–alanine 21 are cleaved as a signal peptide. Positions arginine 22–valine 60 are excised as a propeptide. The active-site Proton acceptor is aspartate 228. Asparagine 352 carries N-linked (GlcNAc...) asparagine glycosylation. Heme is bound at residue histidine 367. Asparagine 403 carries an N-linked (GlcNAc...) asparagine glycan.

It belongs to the DyP-type peroxidase family. Heme b is required as a cofactor.

It is found in the secreted. It catalyses the reaction Reactive Blue 5 + 2 H2O2 = 2,2'-disulfonyl azobenzene + 3-[(4-amino-6-chloro-1,3,5-triazin-2-yl)amino]benzenesulfonate + phthalate + 2 H2O + 2 H(+). It carries out the reaction 2 a phenolic donor + H2O2 = 2 a phenolic radical donor + 2 H2O. Functionally, manganese-independent peroxidase that is able to convert a large number of compounds, but its physiological substrate is not known. In addition to classic peroxidase substrates (e.g. 2,6-dimethoxyphenol), oxidizes dyes such as Reactive Blue 5 and Reactive Black 5. This is Dye-decolorizing peroxidase from Exidia glandulosa (Black witch's butter).